A 280-amino-acid chain; its full sequence is Mediator of RNA polymerase II transcription subunit 2 (280 aa).

Residues 212 to 247 (GLQNTSGGNEKKNDPQINFNDTNAPPSAVNVPENGN) form a disordered region. Positions 226–236 (PQINFNDTNAP) are enriched in polar residues.

Belongs to the Mediator complex subunit 2 family. As to quaternary structure, component of the Mediator complex.

The protein resides in the nucleus. In terms of biological role, component of the Mediator complex, a coactivator involved in the regulated transcription of nearly all RNA polymerase II-dependent genes. Mediator functions as a bridge to convey information from gene-specific regulatory proteins to the basal RNA polymerase II transcription machinery. Mediator is recruited to promoters by direct interactions with regulatory proteins and serves as a scaffold for the assembly of a functional preinitiation complex with RNA polymerase II and the general transcription factors. The sequence is that of Mediator of RNA polymerase II transcription subunit 2 (MED2) from Kluyveromyces lactis (strain ATCC 8585 / CBS 2359 / DSM 70799 / NBRC 1267 / NRRL Y-1140 / WM37) (Yeast).